The chain runs to 398 residues: 4-hydroxy-3-methylbut-2-enyl diphosphate reductase (398 aa).

Position 66 (Cys-66) interacts with [4Fe-4S] cluster. Residue His-96 participates in (2E)-4-hydroxy-3-methylbut-2-enyl diphosphate binding. Residue His-96 participates in dimethylallyl diphosphate binding. Residue His-96 participates in isopentenyl diphosphate binding. Cys-157 lines the [4Fe-4S] cluster pocket. A (2E)-4-hydroxy-3-methylbut-2-enyl diphosphate-binding site is contributed by His-185. His-185 provides a ligand contact to dimethylallyl diphosphate. His-185 contributes to the isopentenyl diphosphate binding site. Glu-187 acts as the Proton donor in catalysis. (2E)-4-hydroxy-3-methylbut-2-enyl diphosphate is bound at residue Thr-250. Cys-288 lines the [4Fe-4S] cluster pocket. Residues Ser-317, Ser-318, Asn-319, and Ser-380 each coordinate (2E)-4-hydroxy-3-methylbut-2-enyl diphosphate. Dimethylallyl diphosphate-binding residues include Ser-317, Ser-318, Asn-319, and Ser-380. Isopentenyl diphosphate is bound by residues Ser-317, Ser-318, Asn-319, and Ser-380.

Belongs to the IspH family. It depends on [4Fe-4S] cluster as a cofactor.

It catalyses the reaction isopentenyl diphosphate + 2 oxidized [2Fe-2S]-[ferredoxin] + H2O = (2E)-4-hydroxy-3-methylbut-2-enyl diphosphate + 2 reduced [2Fe-2S]-[ferredoxin] + 2 H(+). The catalysed reaction is dimethylallyl diphosphate + 2 oxidized [2Fe-2S]-[ferredoxin] + H2O = (2E)-4-hydroxy-3-methylbut-2-enyl diphosphate + 2 reduced [2Fe-2S]-[ferredoxin] + 2 H(+). Its pathway is isoprenoid biosynthesis; dimethylallyl diphosphate biosynthesis; dimethylallyl diphosphate from (2E)-4-hydroxy-3-methylbutenyl diphosphate: step 1/1. The protein operates within isoprenoid biosynthesis; isopentenyl diphosphate biosynthesis via DXP pathway; isopentenyl diphosphate from 1-deoxy-D-xylulose 5-phosphate: step 6/6. Catalyzes the conversion of 1-hydroxy-2-methyl-2-(E)-butenyl 4-diphosphate (HMBPP) into a mixture of isopentenyl diphosphate (IPP) and dimethylallyl diphosphate (DMAPP). Acts in the terminal step of the DOXP/MEP pathway for isoprenoid precursor biosynthesis. The polypeptide is 4-hydroxy-3-methylbut-2-enyl diphosphate reductase (Prochlorococcus marinus (strain AS9601)).